The following is a 224-amino-acid chain: MDNRTLLNWSSILKNEKKKYYFINIINHLFFERQKKMIFPPKGKVFNAFVHTQLYDIKVVILGQDPYYKINQAHGLAFSVENIVKFIPSSLKNIQKEIISDLGQNRSFSHGCLTKWALQGVFLLNSVLTVEAGKPGSHYKLGWERFTNKVISIINEYCKGVVFLLWGSYAQKKICLIDRTRHYILLAPHPSPLSAYRGFFGCRHFSKTNKILKQQNKSPINWFF.

Residue Asp65 is the Proton acceptor of the active site.

The protein belongs to the uracil-DNA glycosylase (UDG) superfamily. UNG family.

The protein localises to the cytoplasm. It carries out the reaction Hydrolyzes single-stranded DNA or mismatched double-stranded DNA and polynucleotides, releasing free uracil.. In terms of biological role, excises uracil residues from the DNA which can arise as a result of misincorporation of dUMP residues by DNA polymerase or due to deamination of cytosine. This chain is Uracil-DNA glycosylase, found in Buchnera aphidicola subsp. Baizongia pistaciae (strain Bp).